A 167-amino-acid chain; its full sequence is Putative C-type lectin protein FPV008/FPV253 (167 aa).

Positions 49–152 constitute a C-type lectin domain; that stretch reads CPDEWIGYNS…SCIFHERTIC (104 aa). Cystine bridges form between cysteine 77/cysteine 152 and cysteine 131/cysteine 144.

The chain is Putative C-type lectin protein FPV008/FPV253 from Vertebrata (FPV).